Reading from the N-terminus, the 460-residue chain is Argininosuccinate lyase (460 aa).

It belongs to the lyase 1 family. Argininosuccinate lyase subfamily.

The protein localises to the cytoplasm. It carries out the reaction 2-(N(omega)-L-arginino)succinate = fumarate + L-arginine. It participates in amino-acid biosynthesis; L-arginine biosynthesis; L-arginine from L-ornithine and carbamoyl phosphate: step 3/3. The chain is Argininosuccinate lyase from Streptococcus uberis (strain ATCC BAA-854 / 0140J).